The sequence spans 355 residues: MTELKNDRYLRALLKEPVDYTPVWMMRQAGRYLPEYKATRAQAGDFMSLCKNAELASEVTLQPLRRFPLDAAILFSDILTIPDAMGLELRFAAGEGPVFDKPITCKADVEKIGLPDPEGELQYVMNAVRQIRKDLNGDVPLIGFSGSPWTLATYMVEGGSSKAFTKIKKMMYAEPQTLHLLLDKLADSVIEYLNAQIKAGAQSVMVFDTWGGVLTPRDYNLFSLQYMHKIVDGLIRENDGRRVPVTLFTKNGGMWLEQIAATGCDAVGLDWTINIADAKARIGDKVALQGNMDPSMLYASPERIREEVAGILEGFGDAGTGHVFNLGHGIHLDVPPENAGVFVEAVHELSKPYHK.

Residues 27–31 (RQAGR), aspartate 77, tyrosine 154, threonine 209, and histidine 328 contribute to the substrate site.

The protein belongs to the uroporphyrinogen decarboxylase family. In terms of assembly, homodimer.

The protein resides in the cytoplasm. The catalysed reaction is uroporphyrinogen III + 4 H(+) = coproporphyrinogen III + 4 CO2. The protein operates within porphyrin-containing compound metabolism; protoporphyrin-IX biosynthesis; coproporphyrinogen-III from 5-aminolevulinate: step 4/4. In terms of biological role, catalyzes the decarboxylation of four acetate groups of uroporphyrinogen-III to yield coproporphyrinogen-III. The protein is Uroporphyrinogen decarboxylase of Vibrio campbellii (strain ATCC BAA-1116).